We begin with the raw amino-acid sequence, 317 residues long: Glutathione synthetase (317 aa).

The region spanning 126–311 (KFFATQFTQC…IGDKLMDAIA (186 aa)) is the ATP-grasp domain. 152–208 (AAEHRDIILKPLDGMGGSSIFRHREGDPNLSVILETLTQHGSQQIMAQRYLPEIKDG) provides a ligand contact to ATP. 2 residues coordinate Mg(2+): E282 and N284.

Belongs to the prokaryotic GSH synthase family. The cofactor is Mg(2+). Mn(2+) serves as cofactor.

It catalyses the reaction gamma-L-glutamyl-L-cysteine + glycine + ATP = glutathione + ADP + phosphate + H(+). It participates in sulfur metabolism; glutathione biosynthesis; glutathione from L-cysteine and L-glutamate: step 2/2. The protein is Glutathione synthetase of Pseudomonas aeruginosa (strain ATCC 15692 / DSM 22644 / CIP 104116 / JCM 14847 / LMG 12228 / 1C / PRS 101 / PAO1).